Reading from the N-terminus, the 123-residue chain is Large ribosomal subunit protein bL17 (123 aa).

This sequence belongs to the bacterial ribosomal protein bL17 family. As to quaternary structure, part of the 50S ribosomal subunit. Contacts protein L32.

This Staphylococcus haemolyticus (strain JCSC1435) protein is Large ribosomal subunit protein bL17.